Consider the following 416-residue polypeptide: Gamma-glutamyl phosphate reductase (416 aa).

It belongs to the gamma-glutamyl phosphate reductase family.

Its subcellular location is the cytoplasm. It catalyses the reaction L-glutamate 5-semialdehyde + phosphate + NADP(+) = L-glutamyl 5-phosphate + NADPH + H(+). It participates in amino-acid biosynthesis; L-proline biosynthesis; L-glutamate 5-semialdehyde from L-glutamate: step 2/2. In terms of biological role, catalyzes the NADPH-dependent reduction of L-glutamate 5-phosphate into L-glutamate 5-semialdehyde and phosphate. The product spontaneously undergoes cyclization to form 1-pyrroline-5-carboxylate. The polypeptide is Gamma-glutamyl phosphate reductase (Halalkalibacterium halodurans (strain ATCC BAA-125 / DSM 18197 / FERM 7344 / JCM 9153 / C-125) (Bacillus halodurans)).